The following is a 1035-amino-acid chain: Beta-galactosidase (1035 aa).

2 residues coordinate substrate: Asn-109 and Asp-208. Asp-208 provides a ligand contact to Na(+). Positions 424, 426, and 469 each coordinate Mg(2+). Substrate contacts are provided by residues Glu-469 and 545–548 (EYAH). The active-site Proton donor is Glu-469. Glu-545 functions as the Nucleophile in the catalytic mechanism. Mg(2+) is bound at residue Asn-605. Phe-609 and Asn-612 together coordinate Na(+). 2 residues coordinate substrate: Asn-612 and Trp-1011.

Belongs to the glycosyl hydrolase 2 family. As to quaternary structure, homotetramer. Mg(2+) is required as a cofactor. Requires Na(+) as cofactor.

It carries out the reaction Hydrolysis of terminal non-reducing beta-D-galactose residues in beta-D-galactosides.. This Klebsiella pneumoniae (strain 342) protein is Beta-galactosidase.